The following is a 193-amino-acid chain: Small COPII coat GTPase SAR1 (193 aa).

Residues 3-5 (FLW) carry the STAR; SAR1-N-terminal activation recruitment. Required for the activation and subsequent recruitment to ER membrane motif. Residues 11-15 (VLNML) form a mediates recruitment to ER membranes region. D30 provides a ligand contact to Mg(2+). GDP is bound by residues N31, A32, G33, K34, T35, and T36. GTP is bound at residue N31. 4 residues coordinate GTP: G33, K34, T35, and T36. D71 is a Mg(2+) binding site. N130, K131, D133, V176, and L177 together coordinate GDP. The GTP site is built by N130, K131, D133, V176, and L177.

The protein belongs to the small GTPase superfamily. SAR1 family. In terms of assembly, homodimer; upon association with membrane. Part of the coat protein complex II/COPII, composed of SEC23/24 and SEC13/31 heterodimers, that it helps recruit and assemble on endoplasmic reticulum (ER) membranes at ER exit sites.

The protein resides in the endoplasmic reticulum membrane. It localises to the golgi apparatus. The protein localises to the golgi stack membrane. Its subcellular location is the cytoplasm. It is found in the cytosol. It carries out the reaction GTP + H2O = GDP + phosphate + H(+). Small GTPases activation is mediated by guanine exchange factors (GEF), while inactivation through hydrolysis of the bound GTP is stimulated by GTPase activating proteins (GAP). Small GTPase that cycles between an active GTP-bound and an inactive GDP-bound state and mainly functions in vesicle-mediated endoplasmic reticulum (ER) to Golgi transport. The active GTP-bound form inserts into the endoplasmic reticulum membrane where it recruits the remainder of the coat protein complex II/COPII. The coat protein complex II assembling and polymerizing on endoplasmic reticulum membrane is responsible for both the sorting of cargos and the deformation and budding of membranes into vesicles destined to the Golgi. Plays a role in transporting the tyrosine kinase receptor let-23 from the endoplasmic reticulum to the plasma membrane of vulval precursor cells. This is Small COPII coat GTPase SAR1 from Caenorhabditis elegans.